The sequence spans 88 residues: Probable glutaredoxin ssr2061 (88 aa).

Cysteines 15 and 18 form a disulfide.

Belongs to the glutaredoxin family.

Has a glutathione-disulfide oxidoreductase activity in the presence of NADPH and glutathione reductase. Reduces low molecular weight disulfides and proteins. This chain is Probable glutaredoxin ssr2061, found in Synechocystis sp. (strain ATCC 27184 / PCC 6803 / Kazusa).